Reading from the N-terminus, the 378-residue chain is tRNA-specific 2-thiouridylase MnmA (378 aa).

ATP is bound by residues glycine 7–serine 14 and methionine 33. Positions asparagine 102 to aspartate 104 are interaction with target base in tRNA. Catalysis depends on cysteine 107, which acts as the Nucleophile. An intrachain disulfide couples cysteine 107 to cysteine 209. Residue glycine 132 coordinates ATP. Residues lysine 159–glutamine 161 form an interaction with tRNA region. The active-site Cysteine persulfide intermediate is the cysteine 209. An interaction with tRNA region spans residues arginine 316 to tyrosine 317.

This sequence belongs to the MnmA/TRMU family.

It is found in the cytoplasm. The catalysed reaction is S-sulfanyl-L-cysteinyl-[protein] + uridine(34) in tRNA + AH2 + ATP = 2-thiouridine(34) in tRNA + L-cysteinyl-[protein] + A + AMP + diphosphate + H(+). Functionally, catalyzes the 2-thiolation of uridine at the wobble position (U34) of tRNA, leading to the formation of s(2)U34. This chain is tRNA-specific 2-thiouridylase MnmA, found in Onion yellows phytoplasma (strain OY-M).